The chain runs to 364 residues: Uroporphyrinogen decarboxylase (364 aa).

Substrate-binding positions include 28-32 (RQAGR), D78, Y160, T215, and H333.

Belongs to the uroporphyrinogen decarboxylase family. Homodimer.

It is found in the cytoplasm. The enzyme catalyses uroporphyrinogen III + 4 H(+) = coproporphyrinogen III + 4 CO2. The protein operates within porphyrin-containing compound metabolism; protoporphyrin-IX biosynthesis; coproporphyrinogen-III from 5-aminolevulinate: step 4/4. Functionally, catalyzes the decarboxylation of four acetate groups of uroporphyrinogen-III to yield coproporphyrinogen-III. The sequence is that of Uroporphyrinogen decarboxylase from Burkholderia thailandensis (strain ATCC 700388 / DSM 13276 / CCUG 48851 / CIP 106301 / E264).